Consider the following 298-residue polypeptide: Acetylglutamate kinase (298 aa).

Substrate is bound by residues 69–70 (GG), R91, and N196.

The protein belongs to the acetylglutamate kinase family. ArgB subfamily.

It localises to the cytoplasm. The enzyme catalyses N-acetyl-L-glutamate + ATP = N-acetyl-L-glutamyl 5-phosphate + ADP. It functions in the pathway amino-acid biosynthesis; L-arginine biosynthesis; N(2)-acetyl-L-ornithine from L-glutamate: step 2/4. Catalyzes the ATP-dependent phosphorylation of N-acetyl-L-glutamate. The protein is Acetylglutamate kinase of Rhodopseudomonas palustris (strain BisB5).